The following is a 141-amino-acid chain: Large ribosomal subunit protein uL11 (141 aa).

It belongs to the universal ribosomal protein uL11 family. As to quaternary structure, part of the ribosomal stalk of the 50S ribosomal subunit. Interacts with L10 and the large rRNA to form the base of the stalk. L10 forms an elongated spine to which L12 dimers bind in a sequential fashion forming a multimeric L10(L12)X complex. One or more lysine residues are methylated.

In terms of biological role, forms part of the ribosomal stalk which helps the ribosome interact with GTP-bound translation factors. This chain is Large ribosomal subunit protein uL11, found in Streptococcus sanguinis (strain SK36).